Here is a 522-residue protein sequence, read N- to C-terminus: Cytochrome P450 26C1 (522 aa).

Residues 9–29 form a helical membrane-spanning segment; it reads LSVLGAAGTALLCAGLLLSLA. Cys459 is a binding site for heme.

Belongs to the cytochrome P450 family. Heme serves as cofactor. As to expression, detected in most tissues at very low level.

It is found in the membrane. It catalyses the reaction an organic molecule + reduced [NADPH--hemoprotein reductase] + O2 = an alcohol + oxidized [NADPH--hemoprotein reductase] + H2O + H(+). The enzyme catalyses all-trans-retinoate + reduced [NADPH--hemoprotein reductase] + O2 = all-trans-4-hydroxyretinoate + oxidized [NADPH--hemoprotein reductase] + H2O + H(+). It carries out the reaction all-trans-4-hydroxyretinoate + reduced [NADPH--hemoprotein reductase] + O2 = all-trans-4-oxoretinoate + oxidized [NADPH--hemoprotein reductase] + 2 H2O + H(+). The catalysed reaction is 9-cis-retinoate + reduced [NADPH--hemoprotein reductase] + O2 = 9-cis-4-hydroxyretinoate + oxidized [NADPH--hemoprotein reductase] + H2O + H(+). It catalyses the reaction 9-cis-4-hydroxyretinoate + reduced [NADPH--hemoprotein reductase] + O2 = 9-cis-4-oxoretinoate + oxidized [NADPH--hemoprotein reductase] + 2 H2O + H(+). The enzyme catalyses all-trans-4-hydroxy-13,14-dihydroretinoate + reduced [NADPH--hemoprotein reductase] + O2 = all-trans-4-oxo-13,14-dihydroretinoate + oxidized [NADPH--hemoprotein reductase] + 2 H2O + H(+). It carries out the reaction all-trans-13,14-dihydroretinoate + reduced [NADPH--hemoprotein reductase] + O2 = all-trans-4-hydroxy-13,14-dihydroretinoate + oxidized [NADPH--hemoprotein reductase] + H2O + H(+). A cytochrome P450 monooxygenase involved in the metabolism of retinoates (RAs), the active metabolites of vitamin A, and critical signaling molecules in animals. RAs exist as at least four different isomers: all-trans-RA (atRA), 9-cis-RA, 13-cis-RA, and 9,13-dicis-RA, where atRA is considered to be the biologically active isomer, although 9-cis-RA and 13-cis-RA also have activity. Catalyzes the oxidation of atRA primarily at C-4. Oxidation of atRA limits its biological activity and initiates a degradative process leading to its eventual elimination, thereby contributes to the regulation of atRA homeostasis and signaling. Able to metabolize other RAs such as 9-cis with high efficiency. Can oxidize all-trans-13,14-dihydroretinoate (DRA) to metabolites which could include all-trans-4-oxo-DRA, all-trans-4-hydroxy-DRA, all-trans-5,8-epoxy-DRA, and all-trans-18-hydroxy-DRA. Shares sequence similarity with other CYP26 family members, but has higher affinity to 9-cis-RA and is much less sensitive to the inhibitory effects of ketoconazole. In cooperation with Cyp26a1, contributes to the CNS patterning and the development of regions of higher visual acuity. The sequence is that of Cytochrome P450 26C1 (CYP26C1) from Homo sapiens (Human).